The chain runs to 88 residues: MRLLISLPVLIVVLAMALEGPAPAQATPDLSSAFENLPEKLKEFGNTLEDKARAAIEHIKQKEILTKTRTWFSETFGKLKEKLKTTFD.

The signal sequence occupies residues methionine 1 to alanine 26.

The protein belongs to the apolipoprotein C1 family.

The protein localises to the secreted. In terms of biological role, inhibitor of lipoprotein binding to the low density lipoprotein (LDL) receptor, LDL receptor-related protein, and very low density lipoprotein (VLDL) receptor. Associates with high density lipoproteins (HDL) and the triacylglycerol-rich lipoproteins in the plasma and makes up about 10% of the protein of the VLDL and 2% of that of HDL. Appears to interfere directly with fatty acid uptake and is also the major plasma inhibitor of cholesteryl ester transfer protein (CETP). Modulates the interaction of APOE with beta-migrating VLDL and inhibits binding of beta-VLDL to the LDL receptor-related protein. Binds free fatty acids and reduces their intracellular esterification. This Mesocricetus auratus (Golden hamster) protein is Apolipoprotein C-I (APOC1).